Consider the following 197-residue polypeptide: Carbohydrate-binding domain-containing protein C2E1P3.05c (197 aa).

Positions 1-23 are cleaved as a signal peptide; the sequence is MLTQSLFLTVLTLALSLVSKTSA. CBM1 domains follow at residues 25-61 and 68-104; these read QCSPRYGTCGGIYYDGPTCCVVGSSCIYSNPWYSQCI and PCAKLYQQCGGINYNGPTCCEPGSECIYNGPYYSQCI. Intrachain disulfides connect Cys-33-Cys-50, Cys-44-Cys-60, Cys-76-Cys-93, and Cys-87-Cys-103. Residues 115–163 are disordered; that stretch reads SSAASSTTSTTSSSSLVSSTTLTSSSPSAVSSTTSIPSISSTISSSVST. N-linked (GlcNAc...) asparagine glycans are attached at residues Asn-182 and Asn-193.

It is found in the secreted. The polypeptide is Carbohydrate-binding domain-containing protein C2E1P3.05c (Schizosaccharomyces pombe (strain 972 / ATCC 24843) (Fission yeast)).